Consider the following 312-residue polypeptide: DNA-directed RNA polymerase subunit alpha (312 aa).

Residues 1-226 (MIEFEKPNIT…EHFKVFMSTD (226 aa)) form an alpha N-terminal domain (alpha-NTD) region. Positions 243-312 (NEKKLEMTIE…ELGLSLRQDD (70 aa)) are alpha C-terminal domain (alpha-CTD).

It belongs to the RNA polymerase alpha chain family. In terms of assembly, homodimer. The RNAP catalytic core consists of 2 alpha, 1 beta, 1 beta' and 1 omega subunit. When a sigma factor is associated with the core the holoenzyme is formed, which can initiate transcription.

It carries out the reaction RNA(n) + a ribonucleoside 5'-triphosphate = RNA(n+1) + diphosphate. DNA-dependent RNA polymerase catalyzes the transcription of DNA into RNA using the four ribonucleoside triphosphates as substrates. This Lactobacillus gasseri (strain ATCC 33323 / DSM 20243 / BCRC 14619 / CIP 102991 / JCM 1131 / KCTC 3163 / NCIMB 11718 / NCTC 13722 / AM63) protein is DNA-directed RNA polymerase subunit alpha.